The primary structure comprises 412 residues: 4-hydroxy-3-methylbut-2-en-1-yl diphosphate synthase (ferredoxin) (412 aa).

Positions methionine 1 to glutamine 12 are enriched in polar residues. The disordered stretch occupies residues methionine 1 to arginine 22. [4Fe-4S] cluster is bound by residues cysteine 314, cysteine 317, cysteine 348, and glutamate 355.

The protein belongs to the IspG family. Requires [4Fe-4S] cluster as cofactor.

The catalysed reaction is (2E)-4-hydroxy-3-methylbut-2-enyl diphosphate + 2 oxidized [2Fe-2S]-[ferredoxin] + H2O = 2-C-methyl-D-erythritol 2,4-cyclic diphosphate + 2 reduced [2Fe-2S]-[ferredoxin] + H(+). It participates in isoprenoid biosynthesis; isopentenyl diphosphate biosynthesis via DXP pathway; isopentenyl diphosphate from 1-deoxy-D-xylulose 5-phosphate: step 5/6. In terms of biological role, converts 2C-methyl-D-erythritol 2,4-cyclodiphosphate (ME-2,4cPP) into 1-hydroxy-2-methyl-2-(E)-butenyl 4-diphosphate. In Synechococcus sp. (strain JA-3-3Ab) (Cyanobacteria bacterium Yellowstone A-Prime), this protein is 4-hydroxy-3-methylbut-2-en-1-yl diphosphate synthase (ferredoxin).